The sequence spans 243 residues: I/6 autoantigen (243 aa).

In terms of domain architecture, EF-hand spans 110-145 (LSVEEVDALFNALDSDNRGYVSVDEFMDALYGEEGR). Positions 166–243 (PSWRMRPTPK…PPKQKAGCGC (78 aa)) are disordered. Residues 176 to 196 (PTRKLRQKRKREQGQKRKQGQ) are compositionally biased toward basic residues. Repeat copies occupy residues 181-188 (RQKRKREQ), 189-196 (GQKRKQGQ), 197-204 (RQKQEQGQ), 205-212 (RQKREQGQ), 213-220 (RQKQEQGQ), and 221-228 (KRKRERGG). Residues 181-228 (RQKRKREQGQKRKQGQRQKQEQGQRQKREQGQRQKQEQGQKRKRERGG) are 6 X 8 AA tandem repeats. Basic and acidic residues predominate over residues 198–220 (QKQEQGQRQKREQGQRQKQEQGQ).

The protein localises to the cytoplasm. It localises to the cytoskeleton. In terms of biological role, microtubule-associated protein that may be involved in cross-linking microtubules. The polypeptide is I/6 autoantigen (Trypanosoma brucei brucei).